Here is a 443-residue protein sequence, read N- to C-terminus: Tol-Pal system protein TolB (443 aa).

The signal sequence occupies residues 1–24 (MSFQIRVFTAILAVLSLFTAPVLA). The tract at residues 424 to 443 (LRPVRTPEGGSDPSWSPLQR) is disordered.

This sequence belongs to the TolB family. The Tol-Pal system is composed of five core proteins: the inner membrane proteins TolA, TolQ and TolR, the periplasmic protein TolB and the outer membrane protein Pal. They form a network linking the inner and outer membranes and the peptidoglycan layer.

It is found in the periplasm. Its function is as follows. Part of the Tol-Pal system, which plays a role in outer membrane invagination during cell division and is important for maintaining outer membrane integrity. In Roseobacter denitrificans (strain ATCC 33942 / OCh 114) (Erythrobacter sp. (strain OCh 114)), this protein is Tol-Pal system protein TolB.